A 619-amino-acid chain; its full sequence is Cationic amino acid transporter 3 (619 aa).

Topologically, residues 1–36 are cytoplasmic; the sequence is MPWQAFRRFGQKLVRRRTLESGMAETRLARCLSTLD. Residues 37–57 traverse the membrane as a helical segment; that stretch reads LVALGVGSTLGAGVYVLAGEV. Residues 58 to 61 are Extracellular-facing; the sequence is AKDK. The chain crosses the membrane as a helical span at residues 62-82; the sequence is AGPSIVICFLVAALSSVLAGL. At 83 to 107 the chain is on the cytoplasmic side; that stretch reads CYAEFGARVPRSGSAYLYSYVTVGE. Residues 108 to 128 form a helical membrane-spanning segment; sequence LWAFTTGWNLILSYVIGTASV. The Extracellular segment spans residues 129 to 162; the sequence is ARAWSSAFDNLIGNHISKTLQGSIALHVPHVLAE. Residues 163–183 traverse the membrane as a helical segment; that stretch reads YPDFFALGLVLLLTGLLALGA. Residues 184–191 lie on the Cytoplasmic side of the membrane; the sequence is SESALVTK. The helical transmembrane segment at 192–212 threads the bilayer; sequence VFTGVNLLVLGFVMISGFVKG. Over 213-233 the chain is Extracellular; sequence DVHNWKLTEEDYELAMAELND. Asparagine 232 carries N-linked (GlcNAc...) asparagine glycosylation. Residues 234–254 traverse the membrane as a helical segment; sequence TYSLGPLGSGGFVPFGFEGIL. Over 255–285 the chain is Cytoplasmic; the sequence is RGAATCFYAFVGFDCIATTGEEAQNPQRSIP. Residues 286–306 form a helical membrane-spanning segment; it reads MGIVISLSVCFLAYFAVSSAL. Topologically, residues 307 to 335 are extracellular; the sequence is TLMMPYYQLQPESPLPEAFLYIGWAPARY. Residues 336-356 traverse the membrane as a helical segment; it reads VVAVGSLCALSTSLLGSMFPM. Residues 357 to 382 lie on the Cytoplasmic side of the membrane; that stretch reads PRVIYAMAEDGLLFRVLARIHTGTRT. The chain crosses the membrane as a helical span at residues 383–403; that stretch reads PIIATVVSGIIAAFMAFLFKL. The Extracellular portion of the chain corresponds to 404–406; it reads TDL. Residues 407-427 traverse the membrane as a helical segment; it reads VDLMSIGTLLAYSLVSICVLI. Topologically, residues 428 to 475 are cytoplasmic; the sequence is LRYQPDQETKTGEEVELQEEAITTESEKLTLWGLFFPLNSIPTPLSGQ. The chain crosses the membrane as a helical span at residues 476–496; the sequence is IVYVCSSLLAVLLTALCLVLA. The Extracellular portion of the chain corresponds to 497–506; that stretch reads QWSVPLLSGD. The helical transmembrane segment at 507-527 threads the bilayer; that stretch reads LLWTAVVVLLLLLIIGIIVVI. Residues 528 to 540 lie on the Cytoplasmic side of the membrane; that stretch reads WRQPQSSTPLHFK. A helical membrane pass occupies residues 541-561; that stretch reads VPALPLLPLMSIFVNIYLMMQ. Residues 562–569 lie on the Extracellular side of the membrane; that stretch reads MTAGTWAR. Residues 570 to 590 form a helical membrane-spanning segment; it reads FGVWMLIGFAIYFGYGIQHSL. The Cytoplasmic portion of the chain corresponds to 591 to 619; that stretch reads EEIKSNQPSRKSRAKTVDLDPGTLYVHSV. Residue threonine 606 is modified to Phosphothreonine. At serine 618 the chain carries Phosphoserine.

The protein belongs to the amino acid-polyamine-organocation (APC) superfamily. Cationic amino acid transporter (CAT) (TC 2.A.3.3) family. Post-translationally, N-glycosylated. In terms of tissue distribution, highly expressed in thymus, uterus and testis. Detected at lower levels in brain, mammary gland, prostate, salivary gland and fetal spleen. In brain, highest expression in thalamus, hippocampus and amygdala.

It localises to the cell membrane. The enzyme catalyses L-arginine(in) = L-arginine(out). It catalyses the reaction L-lysine(in) = L-lysine(out). The catalysed reaction is L-ornithine(in) = L-ornithine(out). In terms of biological role, uniporter that mediates the uptake of cationic L-amino acids such as L-arginine, L-lysine and L-ornithine. The transport is sodium ions- and pH-independent, moderately trans-stimulated and is mediated by passive diffusion. The protein is Cationic amino acid transporter 3 of Homo sapiens (Human).